A 623-amino-acid chain; its full sequence is Heterogeneous nuclear ribonucleoprotein Q (623 aa).

Ala-2 is subject to N-acetylalanine. Ser-159 carries the post-translational modification Phosphoserine. RRM domains lie at 162 to 241, 243 to 325, and 338 to 408; these read TEIF…ISVA, NRLF…WADP, and KVLF…FAKP. Lys-168 participates in a covalent cross-link: Glycyl lysine isopeptide (Lys-Gly) (interchain with G-Cter in SUMO2). An N6-acetyllysine modification is found at Lys-221. Lys-363 is subject to N6-acetyllysine. The residue at position 373 (Tyr-373) is a Phosphotyrosine. The segment at 400–561 is interaction with APOBEC1; the sequence is NIEIVFAKPP…GARGGRGGNV (162 aa). Arg-444 carries the post-translational modification Asymmetric dimethylarginine; by PRMT1; alternate. Position 444 is an omega-N-methylarginine; by PRMT1; alternate (Arg-444). A run of 6 repeats spans residues 448–450, 451–453, 460–464, 469–472, 478–480, and 485–488. Residues 448–559 form an 8 X 3 AA repeats of R-G-G region; it reads RGGRGGYGYP…VRGARGGRGG (112 aa). Residues 460 to 488 form a 3 X 4 AA repeats of Y-Y-G-Y region; the sequence is YYGYEDYYDYYGYDYHNYRGGYEDPYYGY. An Omega-N-methylarginine; by PRMT1 modification is found at Arg-496. The tract at residues 497–623 is disordered; the sequence is GRGGRGARGA…YQDTFGQQWK (127 aa). Residues 498-500 form a 1-4 repeat; the sequence is RGG. Residues 504 to 522 show a composition bias toward low complexity; it reads RGAAPSRGRGAAPPRGRAG. Arg-510 carries the post-translational modification Asymmetric dimethylarginine; by PRMT1. An asymmetric dimethylarginine; by PRMT1; alternate mark is found at Arg-518, Arg-526, Arg-536, and Arg-539. Omega-N-methylarginine; by PRMT1; alternate is present on residues Arg-518, Arg-526, Arg-536, and Arg-539. Residues 518-549 are interaction with SMN; the sequence is RGRAGYSQRGGPGSARGVRGARGGAQQQRGRG. The stretch at 526 to 528 is one 1-5 repeat; the sequence is RGG. A run of 3 repeats spans residues 539-541, 554-556, and 557-559. Residues 550–562 show a composition bias toward gly residues; that stretch reads VRGARGGRGGNVG. The Bipartite nuclear localization signal motif lies at 564-578; that stretch reads KRKADGYNQPDSKRR. The segment covering 580–595 has biased composition (polar residues); it reads TNNQNWGSQPIAQQPL. A Phosphoserine modification is found at Ser-587. Residue Lys-607 forms a Glycyl lysine isopeptide (Lys-Gly) (interchain with G-Cter in SUMO2) linkage. Polar residues predominate over residues 611–623; sequence QEFYQDTFGQQWK.

Isoform 1 is a component of the APOB mRNA editosome complex and interacts with APOBEC1 and A1CF (APOBEC1 complementation factor). Part of a complex associated with the FOS mCRD domain and consisting of PABPC1, PAIP1, CSDE1/UNR, HNRPD and SYNCRIP. Isoform 3 interacts with HNRPR. Interacts with POLR2A hyperphosphorylated C-terminal domain. Isoform 1, isoform 2 and isoform 3 interact with SMN. Isoform 3 interacts through its C-terminal domain with SYT7, SYT8 and SYT9. The non-phosphorylated and phosphorylated forms are colocalized with PAIP1 in polysomes. Interacts with HABP4. Identified in a histone pre-mRNA complex, at least composed of ERI1, LSM11, SLBP, SNRPB, SYNCRIP and YBX1. Identified in the spliceosome C complex. Component of the coding region determinant (CRD)-mediated complex, composed of DHX9, HNRNPU, IGF2BP1, SYNCRIP and YBX1. Identified in a mRNP complex, at least composed of DHX9, DDX3X, ELAVL1, HNRNPU, IGF2BP1, ILF3, PABPC1, PCBP2, PTBP2, STAU1, STAU2, SYNCRIP and YBX1. Identified in a mRNP granule complex, at least composed of ACTB, ACTN4, DHX9, ERG, HNRNPA1, HNRNPA2B1, HNRNPAB, HNRNPD, HNRNPL, HNRNPR, HNRNPU, HSPA1, HSPA8, IGF2BP1, ILF2, ILF3, NCBP1, NCL, PABPC1, PABPC4, PABPN1, RPLP0, RPS3, RPS3A, RPS4X, RPS8, RPS9, SYNCRIP, YBX1 and untranslated mRNAs. Interacts with GTPBP1. Component of the GAIT complex; in humans the complex assembly seems to be a two-step process in which EPRS1 first associates with SYNCRIP to form a pre-GAIT complex which is deficient in GAIT element binding. As to quaternary structure, (Microbial infection) Interacts with minute virus of mice (MVM) NS1 protein. In terms of assembly, (Microbial infection) Interacts with herpes virus 8/HHV-8 protein vIRF-1; this interaction induces ubiquitination and degradation of SYNCRIP. In terms of processing, phosphorylated on tyrosine. The membrane-bound form found in microsomes is phosphorylated in vitro by insulin receptor tyrosine kinase (INSR). Phosphorylation is inhibited upon binding to RNA, whereas the cytoplasmic form is poorly phosphorylated. As to expression, ubiquitously expressed. Detected in heart, brain, pancreas, placenta, spleen, lung, liver, skeletal muscle, kidney, thymus, prostate, uterus, small intestine, colon, peripheral blood and testis.

The protein resides in the cytoplasm. The protein localises to the microsome. It localises to the endoplasmic reticulum. Its subcellular location is the nucleus. It is found in the nucleoplasm. In terms of biological role, heterogenous nuclear ribonucleoprotein (hnRNP) implicated in mRNA processing mechanisms. Component of the CRD-mediated complex that promotes MYC mRNA stability. Isoform 1, isoform 2 and isoform 3 are associated in vitro with pre-mRNA, splicing intermediates and mature mRNA protein complexes. Isoform 1 binds to apoB mRNA AU-rich sequences. Isoform 1 is part of the APOB mRNA editosome complex and may modulate the postranscriptional C to U RNA-editing of the APOB mRNA through either by binding to A1CF (APOBEC1 complementation factor), to APOBEC1 or to RNA itself. May be involved in translationally coupled mRNA turnover. Implicated with other RNA-binding proteins in the cytoplasmic deadenylation/translational and decay interplay of the FOS mRNA mediated by the major coding-region determinant of instability (mCRD) domain. Interacts in vitro preferentially with poly(A) and poly(U) RNA sequences. Isoform 3 may be involved in cytoplasmic vesicle-based mRNA transport through interaction with synaptotagmins. Component of the GAIT (gamma interferon-activated inhibitor of translation) complex which mediates interferon-gamma-induced transcript-selective translation inhibition in inflammation processes. Upon interferon-gamma activation assembles into the GAIT complex which binds to stem loop-containing GAIT elements in the 3'-UTR of diverse inflammatory mRNAs (such as ceruplasmin) and suppresses their translation; seems not to be essential for GAIT complex function. This chain is Heterogeneous nuclear ribonucleoprotein Q (SYNCRIP), found in Homo sapiens (Human).